The primary structure comprises 679 residues: Methionine--tRNA ligase (679 aa).

The 'HIGH' region signature appears at 14–24 (PYANGSIHLGH). 4 residues coordinate Zn(2+): cysteine 145, cysteine 148, cysteine 158, and cysteine 161. Positions 331–335 (KMSKS) match the 'KMSKS' region motif. Lysine 334 contributes to the ATP binding site. Residues 577–679 (TFAAVDLRVA…SGAKPGQRIK (103 aa)) form the tRNA-binding domain.

It belongs to the class-I aminoacyl-tRNA synthetase family. MetG type 1 subfamily. As to quaternary structure, homodimer. Requires Zn(2+) as cofactor.

The protein localises to the cytoplasm. It carries out the reaction tRNA(Met) + L-methionine + ATP = L-methionyl-tRNA(Met) + AMP + diphosphate. Its function is as follows. Is required not only for elongation of protein synthesis but also for the initiation of all mRNA translation through initiator tRNA(fMet) aminoacylation. In Pseudomonas entomophila (strain L48), this protein is Methionine--tRNA ligase.